Reading from the N-terminus, the 224-residue chain is UPF0111 protein CT_691 (224 aa).

Belongs to the UPF0111 family.

In Chlamydia trachomatis serovar D (strain ATCC VR-885 / DSM 19411 / UW-3/Cx), this protein is UPF0111 protein CT_691.